Consider the following 159-residue polypeptide: Protein Smg homolog (159 aa).

The protein belongs to the Smg family.

The polypeptide is Protein Smg homolog (Nitrosococcus oceani (strain ATCC 19707 / BCRC 17464 / JCM 30415 / NCIMB 11848 / C-107)).